Reading from the N-terminus, the 166-residue chain is Ribosome maturation factor RimM (166 aa).

One can recognise a PRC barrel domain in the interval 92-164; sequence EGVYYDFQLI…KIIIDPIPGL (73 aa).

Belongs to the RimM family. As to quaternary structure, binds ribosomal protein uS19.

The protein localises to the cytoplasm. An accessory protein needed during the final step in the assembly of 30S ribosomal subunit, possibly for assembly of the head region. Essential for efficient processing of 16S rRNA. May be needed both before and after RbfA during the maturation of 16S rRNA. It has affinity for free ribosomal 30S subunits but not for 70S ribosomes. The protein is Ribosome maturation factor RimM of Dehalococcoides mccartyi (strain CBDB1).